The sequence spans 468 residues: Cytochrome P450-like protein L532 (468 aa).

2 helical membrane passes run Trp22–Ile42 and Val172–Val192. Cys415 lines the heme pocket.

It belongs to the cytochrome P450 family. Requires heme as cofactor.

Its subcellular location is the host membrane. The protein resides in the virion. This chain is Cytochrome P450-like protein L532, found in Acanthamoeba polyphaga mimivirus (APMV).